Here is a 277-residue protein sequence, read N- to C-terminus: ATP synthase subunit a (277 aa).

Helical transmembrane passes span 40–60 (AWHV…LIIF), 98–118 (SALI…MNLM), 154–174 (DLNL…FYSI), 219–239 (LFGN…IGYF), and 245–265 (FMWA…FMML).

It belongs to the ATPase A chain family. In terms of assembly, F-type ATPases have 2 components, CF(1) - the catalytic core - and CF(0) - the membrane proton channel. CF(1) has five subunits: alpha(3), beta(3), gamma(1), delta(1), epsilon(1). CF(0) has three main subunits: a(1), b(2) and c(9-12). The alpha and beta chains form an alternating ring which encloses part of the gamma chain. CF(1) is attached to CF(0) by a central stalk formed by the gamma and epsilon chains, while a peripheral stalk is formed by the delta and b chains.

It is found in the cell inner membrane. In terms of biological role, key component of the proton channel; it plays a direct role in the translocation of protons across the membrane. The sequence is that of ATP synthase subunit a from Alteromonas mediterranea (strain DSM 17117 / CIP 110805 / LMG 28347 / Deep ecotype).